We begin with the raw amino-acid sequence, 687 residues long: Polyphosphate kinase (687 aa).

Residue Asn45 participates in ATP binding. Residues Arg375 and Arg405 each coordinate Mg(2+). His435 functions as the Phosphohistidine intermediate in the catalytic mechanism. ATP contacts are provided by Tyr472, Arg568, and His596.

It belongs to the polyphosphate kinase 1 (PPK1) family. Requires Mg(2+) as cofactor. In terms of processing, an intermediate of this reaction is the autophosphorylated ppk in which a phosphate is covalently linked to a histidine residue through a N-P bond.

The enzyme catalyses [phosphate](n) + ATP = [phosphate](n+1) + ADP. Functionally, catalyzes the reversible transfer of the terminal phosphate of ATP to form a long-chain polyphosphate (polyP). The sequence is that of Polyphosphate kinase from Burkholderia vietnamiensis (strain G4 / LMG 22486) (Burkholderia cepacia (strain R1808)).